A 137-amino-acid polypeptide reads, in one-letter code: Large ribosomal subunit protein uL16 (137 aa).

This sequence belongs to the universal ribosomal protein uL16 family. In terms of assembly, part of the 50S ribosomal subunit.

Its function is as follows. Binds 23S rRNA and is also seen to make contacts with the A and possibly P site tRNAs. The sequence is that of Large ribosomal subunit protein uL16 from Coxiella burnetii (strain RSA 331 / Henzerling II).